A 160-amino-acid chain; its full sequence is SsrA-binding protein (160 aa).

It belongs to the SmpB family.

The protein resides in the cytoplasm. In terms of biological role, required for rescue of stalled ribosomes mediated by trans-translation. Binds to transfer-messenger RNA (tmRNA), required for stable association of tmRNA with ribosomes. tmRNA and SmpB together mimic tRNA shape, replacing the anticodon stem-loop with SmpB. tmRNA is encoded by the ssrA gene; the 2 termini fold to resemble tRNA(Ala) and it encodes a 'tag peptide', a short internal open reading frame. During trans-translation Ala-aminoacylated tmRNA acts like a tRNA, entering the A-site of stalled ribosomes, displacing the stalled mRNA. The ribosome then switches to translate the ORF on the tmRNA; the nascent peptide is terminated with the 'tag peptide' encoded by the tmRNA and targeted for degradation. The ribosome is freed to recommence translation, which seems to be the essential function of trans-translation. The chain is SsrA-binding protein from Escherichia coli O139:H28 (strain E24377A / ETEC).